The primary structure comprises 191 residues: Chromobox protein homolog 5 (191 aa).

Ser11, Ser12, Ser13, and Ser14 each carry phosphoserine. Positions 20 to 78 (YVVEKVLDRRVVKGQVEYLLKWKGFSEEHNTWEPEKNLDCPELISEFMKKYKKMKEGEN) constitute a Chromo 1 domain. Lys32 is covalently cross-linked (Glycyl lysine isopeptide (Lys-Gly) (interchain with G-Cter in SUMO2)). Lys40 is subject to N6-acetyllysine. The interval 70 to 117 (YKKMKEGENNKPREKSESNKRKSNFSNSADDIKSKKKREQSNDIARGF) is disordered. Positions 73-89 (MKEGENNKPREKSESNK) are enriched in basic and acidic residues. Residue Lys91 forms a Glycyl lysine isopeptide (Lys-Gly) (interchain with G-Cter in SUMO2) linkage. 3 positions are modified to phosphoserine: Ser92, Ser95, and Ser97. Residues Lys102, Lys106, Lys154, and Lys184 each participate in a glycyl lysine isopeptide (Lys-Gly) (interchain with G-Cter in SUMO2) cross-link. The Chromo 2; shadow subtype domain maps to 121 to 179 (LEPEKIIGATDSCGDLMFLMKWKDTDEADLVLAKEANVKCPQIVIAFYEERLTWHAYPE).

Homodimer. Interacts with histone H3 methylated at 'Lys-9'. Interacts (via Chromo 2; shadow subtype domain) with the MIS12 complex subunit NSL1; the interaction is direct, involves dimeric CBX5, and occurs during interphase. Interacts with POGZ; POGZ and PXVXL motif-containing proteins such as INCENP and TRIM28 compete for interaction with CBX5. Interacts with LRIF1 (via PxVxL motif). Interacts with INCENP. Interacts with TRIM24. Interacts (via the chromoshadow domain) with ATRX; the interaction is direct. Interacts (via the chromoshadow domain) with CHAF1A; the interaction is direct. Interacts (via the chromoshadow domain) with LBR; the interaction is direct. Interacts (via the chromoshadow domain) with NIPBL; the interaction is direct. Interacts (via the chromoshadow domain) with SP100; the interaction is direct. Interacts (via the chromoshadow domain) with STAM2; the interaction is direct. Interacts (via the chromoshadow domain) with TRIM28; the interaction is direct. Interacts (via the chromoshadow domain) with CBX3; the interaction is direct. Interacts with PRR14 (via N-terminus). Interacts with RRP1B. Interacts with HNRNPU (via C-terminus); this interaction is, at least in part, RNA-dependent. Interacts with ZNF263; recruited to the SIX3 promoter along with other proteins involved in chromatin modification and transcriptional corepression where it contributes to transcriptional repression. Interacts with AURKB during mitosis. Interacts with CHAMP1. Interacts with BAHD1. Interacts with HP1BP3. Interacts with CHD3. Interacts with CHD4. Interacts with SMYD5. Interacts with KMT5B. Interacts with KMT5C. In terms of assembly, (Microbial infection) Interacts with JC virus agnoprotein; this interaction induces the dissociation of CBX5 from LBR, resulting in destabilization of the nuclear envelope. Phosphorylation of HP1 and LBR may be responsible for some of the alterations in chromatin organization and nuclear structure which occur at various times during the cell cycle. Phosphorylated during interphase and possibly hyper-phosphorylated during mitosis. In terms of processing, ubiquitinated.

The protein resides in the nucleus. The protein localises to the chromosome. Its subcellular location is the centromere. Component of heterochromatin that recognizes and binds histone H3 tails methylated at 'Lys-9' (H3K9me), leading to epigenetic repression. In contrast, it is excluded from chromatin when 'Tyr-41' of histone H3 is phosphorylated (H3Y41ph). May contribute to the association of heterochromatin with the inner nuclear membrane by interactions with the lamin-B receptor (LBR). Involved in the formation of kinetochore through interaction with the MIS12 complex subunit NSL1. Required for the formation of the inner centromere. This chain is Chromobox protein homolog 5 (CBX5), found in Homo sapiens (Human).